A 385-amino-acid polypeptide reads, in one-letter code: Alkanesulfonate monooxygenase (385 aa).

The protein belongs to the SsuD family.

The catalysed reaction is an alkanesulfonate + FMNH2 + O2 = an aldehyde + FMN + sulfite + H2O + 2 H(+). Catalyzes the desulfonation of aliphatic sulfonates. In Paraburkholderia phymatum (strain DSM 17167 / CIP 108236 / LMG 21445 / STM815) (Burkholderia phymatum), this protein is Alkanesulfonate monooxygenase.